The primary structure comprises 90 residues: Small ribosomal subunit protein bS20 (90 aa).

The interval 1–25 (MANSAQARKRARQAAKANSHNSALR) is disordered.

Belongs to the bacterial ribosomal protein bS20 family.

In terms of biological role, binds directly to 16S ribosomal RNA. This chain is Small ribosomal subunit protein bS20, found in Burkholderia multivorans (strain ATCC 17616 / 249).